The following is a 306-amino-acid chain: Ribonuclease Z (306 aa).

Zn(2+) is bound by residues histidine 63, histidine 65, aspartate 67, histidine 68, histidine 141, aspartate 208, and histidine 266. Aspartate 67 (proton acceptor) is an active-site residue.

The protein belongs to the RNase Z family. Homodimer. The cofactor is Zn(2+).

The catalysed reaction is Endonucleolytic cleavage of RNA, removing extra 3' nucleotides from tRNA precursor, generating 3' termini of tRNAs. A 3'-hydroxy group is left at the tRNA terminus and a 5'-phosphoryl group is left at the trailer molecule.. Zinc phosphodiesterase, which displays some tRNA 3'-processing endonuclease activity. Probably involved in tRNA maturation, by removing a 3'-trailer from precursor tRNA. In Chlamydia abortus (strain DSM 27085 / S26/3) (Chlamydophila abortus), this protein is Ribonuclease Z.